The following is a 74-amino-acid chain: Cecropin-P3 (74 aa).

The N-terminal stretch at 1-13 is a signal peptide; sequence MFLIYLLVQTAES. The propeptide at 45–74 is removed in mature form; the sequence is RRRSVGEEDAIPSHIEVNKFFLRKPAKEHI.

The protein belongs to the cecropin family. In terms of tissue distribution, expressed in the body wall, intestine, uterus and ovary.

The protein resides in the secreted. Functionally, has antibacterial activity against several Gram-positive and Gram-negative bacteria. Is weakly active against yeasts. Acts by a nonpore mechanism. The polypeptide is Cecropin-P3 (ASCEC-3) (Ascaris suum (Pig roundworm)).